A 199-amino-acid chain; its full sequence is MTKVKICGLSTEEAVETAVSAGADYIGFVFAPSKRQVTLEEAAELAKLIPSDVKKVGVFVSPSRVELLEAIDKVGLDLVQVHGQVADDLFENLPCASIQAVQVDGNGHVPNSQADYLLFDAPVAGSGQPFDWGQLDTTGLAQPFFIAGGLNEDNVVKAIQHFTPYAVDVSSGVETDGQKDHEKIRRFIERVKHGISGTK.

This sequence belongs to the TrpF family.

The enzyme catalyses N-(5-phospho-beta-D-ribosyl)anthranilate = 1-(2-carboxyphenylamino)-1-deoxy-D-ribulose 5-phosphate. It functions in the pathway amino-acid biosynthesis; L-tryptophan biosynthesis; L-tryptophan from chorismate: step 3/5. The protein is N-(5'-phosphoribosyl)anthranilate isomerase of Streptococcus pneumoniae (strain Hungary19A-6).